The sequence spans 286 residues: Release factor glutamine methyltransferase (286 aa).

Aspartate 136 and asparagine 179 together coordinate S-adenosyl-L-methionine. Asparagine 179 to tyrosine 182 serves as a coordination point for substrate.

Belongs to the protein N5-glutamine methyltransferase family. PrmC subfamily.

It carries out the reaction L-glutaminyl-[peptide chain release factor] + S-adenosyl-L-methionine = N(5)-methyl-L-glutaminyl-[peptide chain release factor] + S-adenosyl-L-homocysteine + H(+). Functionally, methylates the class 1 translation termination release factors RF1/PrfA and RF2/PrfB on the glutamine residue of the universally conserved GGQ motif. The chain is Release factor glutamine methyltransferase from Borreliella burgdorferi (strain ATCC 35210 / DSM 4680 / CIP 102532 / B31) (Borrelia burgdorferi).